The following is a 357-amino-acid chain: Arginine kinase (357 aa).

An N-acetylalanine modification is found at A2. Positions 9–91 constitute a Phosphagen kinase N-terminal domain; sequence KLDEGFKKLE…FDPIIEDYHK (83 aa). An L-arginine-binding site is contributed by 64 to 68; it reads GVGVY. The Phosphagen kinase C-terminal domain maps to 119-356; the sequence is FVISTRVRCG…LELIKIEKEM (238 aa). ATP-binding positions include 122–126 and H185; that span reads STRVR. E225 contacts L-arginine. Residue R229 coordinates ATP. C271 provides a ligand contact to L-arginine. ATP-binding positions include 280-284 and 309-314; these read RASVH and RGTRGE. Position 314 (E314) interacts with L-arginine.

This sequence belongs to the ATP:guanido phosphotransferase family.

It catalyses the reaction L-arginine + ATP = N(omega)-phospho-L-arginine + ADP + H(+). The polypeptide is Arginine kinase (Eriocheir sinensis (Chinese mitten crab)).